We begin with the raw amino-acid sequence, 196 residues long: Nucleoside triphosphate pyrophosphatase (196 aa).

Catalysis depends on D72, which acts as the Proton acceptor.

This sequence belongs to the Maf family. It depends on a divalent metal cation as a cofactor.

The protein resides in the cytoplasm. It catalyses the reaction a ribonucleoside 5'-triphosphate + H2O = a ribonucleoside 5'-phosphate + diphosphate + H(+). The catalysed reaction is a 2'-deoxyribonucleoside 5'-triphosphate + H2O = a 2'-deoxyribonucleoside 5'-phosphate + diphosphate + H(+). Its function is as follows. Nucleoside triphosphate pyrophosphatase. May have a dual role in cell division arrest and in preventing the incorporation of modified nucleotides into cellular nucleic acids. The sequence is that of Nucleoside triphosphate pyrophosphatase from Chlamydia muridarum (strain MoPn / Nigg).